We begin with the raw amino-acid sequence, 296 residues long: Formamidopyrimidine-DNA glycosylase (296 aa).

Proline 2 acts as the Schiff-base intermediate with DNA in catalysis. Residue glutamate 3 is the Proton donor of the active site. The active-site Proton donor; for beta-elimination activity is lysine 61. 3 residues coordinate DNA: histidine 104, arginine 123, and lysine 169. An FPG-type zinc finger spans residues aspartate 255 to proline 289. Arginine 279 serves as the catalytic Proton donor; for delta-elimination activity.

The protein belongs to the FPG family. As to quaternary structure, monomer. Zn(2+) serves as cofactor.

The enzyme catalyses Hydrolysis of DNA containing ring-opened 7-methylguanine residues, releasing 2,6-diamino-4-hydroxy-5-(N-methyl)formamidopyrimidine.. It carries out the reaction 2'-deoxyribonucleotide-(2'-deoxyribose 5'-phosphate)-2'-deoxyribonucleotide-DNA = a 3'-end 2'-deoxyribonucleotide-(2,3-dehydro-2,3-deoxyribose 5'-phosphate)-DNA + a 5'-end 5'-phospho-2'-deoxyribonucleoside-DNA + H(+). In terms of biological role, involved in base excision repair of DNA damaged by oxidation or by mutagenic agents. Acts as a DNA glycosylase that recognizes and removes damaged bases. Has a preference for oxidized purines, such as 7,8-dihydro-8-oxoguanine (8-oxoG). Has AP (apurinic/apyrimidinic) lyase activity and introduces nicks in the DNA strand. Cleaves the DNA backbone by beta-delta elimination to generate a single-strand break at the site of the removed base with both 3'- and 5'-phosphates. In Mycobacterium sp. (strain JLS), this protein is Formamidopyrimidine-DNA glycosylase.